A 543-amino-acid chain; its full sequence is Rop guanine nucleotide exchange factor 11 (543 aa).

The interval 61–89 (QPGKCGSVDRPSLPIGGVTPNRNDKLPRV) is disordered. One can recognise a PRONE domain in the interval 95–456 (MEALIILQAA…QLTQEPTNNA (362 aa)).

In terms of assembly, interacts with ARAC4/ROP2, ARAC3/ROP, ARAC9/ROP8, PHYA and PHYB. In terms of tissue distribution, highly expressed in elongating regions of roots and pollen grains. Expressed in flowers, and at lower levels in leaves and stems.

Its subcellular location is the cytoplasm. Its function is as follows. Guanine-nucleotide exchange factor (GEF) that acts as an activator of Rop (Rho of plants) GTPases by promoting the exchange of GDP for GTP. Functions as a light-signaling switch that functions in root growth and development through the activation of Rop in a phytochrome-dependent manner. May act as a negative regulator of phytochrome-mediated primary root development. The sequence is that of Rop guanine nucleotide exchange factor 11 (ROPGEF11) from Arabidopsis thaliana (Mouse-ear cress).